A 119-amino-acid chain; its full sequence is Putative phosphoethanolamine transferase YjgX (119 aa).

A run of 2 helical transmembrane segments spans residues 5 to 25 (VFPVYHFLVSAAILVFVVIFW) and 94 to 114 (LLLSLVRVCAGIICQCMTIPY).

The protein belongs to the phosphoethanolamine transferase family.

Its subcellular location is the cell inner membrane. In Escherichia coli (strain K12), this protein is Putative phosphoethanolamine transferase YjgX (yjgX).